The sequence spans 1033 residues: Isoleucine--tRNA ligase 2 (1033 aa).

The 'HIGH' region signature appears at Pro-47–His-57. A 'KMSKS' region motif is present at residues Lys-590–Ser-594. Lys-593 contributes to the ATP binding site.

Belongs to the class-I aminoacyl-tRNA synthetase family. IleS type 2 subfamily. As to quaternary structure, monomer. The cofactor is Zn(2+).

It localises to the cytoplasm. It catalyses the reaction tRNA(Ile) + L-isoleucine + ATP = L-isoleucyl-tRNA(Ile) + AMP + diphosphate. Functionally, catalyzes the attachment of isoleucine to tRNA(Ile). As IleRS can inadvertently accommodate and process structurally similar amino acids such as valine, to avoid such errors it has two additional distinct tRNA(Ile)-dependent editing activities. One activity is designated as 'pretransfer' editing and involves the hydrolysis of activated Val-AMP. The other activity is designated 'posttransfer' editing and involves deacylation of mischarged Val-tRNA(Ile). This chain is Isoleucine--tRNA ligase 2, found in Bacillus thuringiensis subsp. konkukian (strain 97-27).